Consider the following 126-residue polypeptide: Fluoride-specific ion channel FluC (126 aa).

4 helical membrane passes run 1–21 (MIVI…FGLD), 40–60 (LATL…GGFA), 72–92 (AISI…VATV), and 104–124 (MVNI…GLSL). The Na(+) site is built by G79 and T82.

Belongs to the fluoride channel Fluc/FEX (TC 1.A.43) family.

It is found in the cell membrane. The catalysed reaction is fluoride(in) = fluoride(out). Na(+) is not transported, but it plays an essential structural role and its presence is essential for fluoride channel function. Fluoride-specific ion channel. Important for reducing fluoride concentration in the cell, thus reducing its toxicity. The sequence is that of Fluoride-specific ion channel FluC from Renibacterium salmoninarum (strain ATCC 33209 / DSM 20767 / JCM 11484 / NBRC 15589 / NCIMB 2235).